We begin with the raw amino-acid sequence, 472 residues long: Zinc finger and BTB domain-containing protein 18.2 (472 aa).

In terms of domain architecture, BTB spans 24–91 (CDCTVLVGEA…MYEGKLEFSN (68 aa)). Basic and acidic residues predominate over residues 127–149 (KIIDDGEKDDKPVDSEEHHEHSF). Disordered stretches follow at residues 127 to 155 (KIID…SQQK), 197 to 236 (AGKT…FKPM), and 269 to 334 (DLLS…LSTS). Residues 205–215 (SSPSSPLSQRS) show a composition bias toward low complexity. The span at 279–288 (AKSPKSQQVG) shows a compositional bias: polar residues. The segment covering 309–319 (HTREDDLYQDR) has biased composition (basic and acidic residues). C2H2-type zinc fingers lie at residues 344–366 (CICP…LSSH), 384–406 (PTCT…ERTH), 412–434 (FTCG…AVVH), and 440–463 (HACK…RKFH).

This sequence belongs to the krueppel C2H2-type zinc-finger protein family. ZBTB18 subfamily.

The protein localises to the nucleus. Functionally, transcriptional repressor that plays a role in various developmental processes. Specifically binds the consensus DNA sequence 5'-[AC]ACATCTG[GT][AC]-3' which contains the E box core, and acts by recruiting chromatin remodeling multiprotein complexes. The chain is Zinc finger and BTB domain-containing protein 18.2 (zbtb18.2) from Xenopus laevis (African clawed frog).